Reading from the N-terminus, the 419-residue chain is Gustatory receptor for sugar taste 64c (419 aa).

Topologically, residues 1–15 (MQQSGQKGTRNTLQH) are cytoplasmic. The helical transmembrane segment at 16 to 36 (AIGPVLVIAQFFGVLPVAGVW) threads the bilayer. The Extracellular segment spans residues 37–48 (PSCRPERVRFRW). A helical membrane pass occupies residues 49 to 69 (ISLSLLAALILFVFSIVDCAL). At 70 to 82 (SSKVVFDHGLKIY) the chain is on the cytoplasmic side. The chain crosses the membrane as a helical span at residues 83 to 103 (TIGSLSFSVICIFCFGVFLLL). Topologically, residues 104–139 (SRRWPYIIRRTAECEQIFLEPEYDCSYGRGYSSRLR) are extracellular. A helical transmembrane segment spans residues 140–160 (LWGVCMLVAALCEHSTYVGSA). The Cytoplasmic segment spans residues 161 to 204 (LYNNHLAIVECKLDANFWQNYFQRERQQLFLIMHFTAWWIPFIE). A helical membrane pass occupies residues 205–225 (WTTLSMTFVWNFVDIFLILIC). Over 226–305 (RGMQMRFQQM…FQSKGNYADE (80 aa)) the chain is Extracellular. The helical transmembrane segment at 306 to 326 (LYFWFCLSYVIIRVLNMMFAA) threads the bilayer. At 327 to 377 (SSIPQEAKEISYTLYEIPTEFWCVELRRLNEIFLSDHFALSGKGYFLLTRR) the chain is on the cytoplasmic side. A helical membrane pass occupies residues 378 to 398 (LIFAMAATLMVYELVLINQMA). The Extracellular segment spans residues 399 to 419 (GSEVQKSFCEGGVGSSKSIFS).

Belongs to the insect chemoreceptor superfamily. Gustatory receptor (GR) family. Gr5a subfamily. Expressed in Gr5a-expressing sugar-sensing cells.

It is found in the cell membrane. In terms of biological role, one of the few identified sugar gustatory receptors identified so far and which promotes the starvation-induced increase of feeding motivation. The chain is Gustatory receptor for sugar taste 64c (Gr64c) from Drosophila melanogaster (Fruit fly).